We begin with the raw amino-acid sequence, 381 residues long: Testis-specific expressed protein 55 (381 aa).

Disordered regions lie at residues Met-1–His-176 and Thr-292–Arg-317. Composition is skewed to basic and acidic residues over residues Ser-8–Asn-24 and Arg-65–Thr-103. Polar residues predominate over residues Ser-104–Ser-113. Basic and acidic residues predominate over residues His-114–Gly-125. Residues Thr-134–Asp-143 are compositionally biased toward acidic residues. Polar residues-rich tracts occupy residues Ser-147–Asn-163 and Thr-292–Val-302. A compositionally biased stretch (low complexity) spans Arg-307 to Arg-317.

In terms of tissue distribution, testis-specific.

The protein resides in the nucleus. The protein is Testis-specific expressed protein 55 of Mus musculus (Mouse).